Consider the following 227-residue polypeptide: Cytochrome c oxidase subunit 2 (227 aa).

Over M1–N22 the chain is Mitochondrial intermembrane. The chain crosses the membrane as a helical span at residues F23–L44. Residues M45–E60 lie on the Mitochondrial matrix side of the membrane. A helical transmembrane segment spans residues V61–L81. The Mitochondrial intermembrane segment spans residues R82–I227. Positions 161, 196, 198, 200, 204, and 207 each coordinate Cu cation. E198 is a binding site for Mg(2+). Y218 carries the post-translational modification Phosphotyrosine.

The protein belongs to the cytochrome c oxidase subunit 2 family. Component of the cytochrome c oxidase (complex IV, CIV), a multisubunit enzyme composed of 14 subunits. The complex is composed of a catalytic core of 3 subunits MT-CO1, MT-CO2 and MT-CO3, encoded in the mitochondrial DNA, and 11 supernumerary subunits COX4I, COX5A, COX5B, COX6A, COX6B, COX6C, COX7A, COX7B, COX7C, COX8 and NDUFA4, which are encoded in the nuclear genome. The complex exists as a monomer or a dimer and forms supercomplexes (SCs) in the inner mitochondrial membrane with NADH-ubiquinone oxidoreductase (complex I, CI) and ubiquinol-cytochrome c oxidoreductase (cytochrome b-c1 complex, complex III, CIII), resulting in different assemblies (supercomplex SCI(1)III(2)IV(1) and megacomplex MCI(2)III(2)IV(2)). Found in a complex with TMEM177, COA6, COX18, COX20, SCO1 and SCO2. Interacts with TMEM177 in a COX20-dependent manner. Interacts with COX20. Interacts with COX16. Cu cation is required as a cofactor.

The protein localises to the mitochondrion inner membrane. The catalysed reaction is 4 Fe(II)-[cytochrome c] + O2 + 8 H(+)(in) = 4 Fe(III)-[cytochrome c] + 2 H2O + 4 H(+)(out). Its function is as follows. Component of the cytochrome c oxidase, the last enzyme in the mitochondrial electron transport chain which drives oxidative phosphorylation. The respiratory chain contains 3 multisubunit complexes succinate dehydrogenase (complex II, CII), ubiquinol-cytochrome c oxidoreductase (cytochrome b-c1 complex, complex III, CIII) and cytochrome c oxidase (complex IV, CIV), that cooperate to transfer electrons derived from NADH and succinate to molecular oxygen, creating an electrochemical gradient over the inner membrane that drives transmembrane transport and the ATP synthase. Cytochrome c oxidase is the component of the respiratory chain that catalyzes the reduction of oxygen to water. Electrons originating from reduced cytochrome c in the intermembrane space (IMS) are transferred via the dinuclear copper A center (CU(A)) of subunit 2 and heme A of subunit 1 to the active site in subunit 1, a binuclear center (BNC) formed by heme A3 and copper B (CU(B)). The BNC reduces molecular oxygen to 2 water molecules using 4 electrons from cytochrome c in the IMS and 4 protons from the mitochondrial matrix. The protein is Cytochrome c oxidase subunit 2 (Mtco2) of Mus musculus (Mouse).